The chain runs to 185 residues: Ribosome maturation factor RimM (185 aa).

Residues 96-171 enclose the PRC barrel domain; that stretch reads EDEFYHSDLL…VITIDPPEDV (76 aa). The disordered stretch occupies residues 165 to 185; that stretch reads IDPPEDVGSKAEEEGGGAPDD.

The protein belongs to the RimM family. In terms of assembly, binds ribosomal protein uS19.

Its subcellular location is the cytoplasm. In terms of biological role, an accessory protein needed during the final step in the assembly of 30S ribosomal subunit, possibly for assembly of the head region. Essential for efficient processing of 16S rRNA. May be needed both before and after RbfA during the maturation of 16S rRNA. It has affinity for free ribosomal 30S subunits but not for 70S ribosomes. This chain is Ribosome maturation factor RimM, found in Maricaulis maris (strain MCS10) (Caulobacter maris).